A 143-amino-acid chain; its full sequence is Transcriptional regulator MraZ (143 aa).

SpoVT-AbrB domains follow at residues 5 to 47 (EYEH…PRGV) and 76 to 119 (AADM…SPRR).

Belongs to the MraZ family. Forms oligomers.

The protein resides in the cytoplasm. Its subcellular location is the nucleoid. The chain is Transcriptional regulator MraZ from Roseiflexus castenholzii (strain DSM 13941 / HLO8).